The following is a 90-amino-acid chain: Probable Fe(2+)-trafficking protein (90 aa).

Belongs to the Fe(2+)-trafficking protein family. Monomer.

In terms of biological role, could be a mediator in iron transactions between iron acquisition and iron-requiring processes, such as synthesis and/or repair of Fe-S clusters in biosynthetic enzymes. This chain is Probable Fe(2+)-trafficking protein, found in Edwardsiella ictaluri (strain 93-146).